The chain runs to 239 residues: U-scoloptoxin(11)-Sm3a (239 aa).

The N-terminal stretch at 1-16 is a signal peptide; sequence MINFLLLVLILSVLES.

This sequence belongs to the scoloptoxin-11 family. In terms of processing, contains 9 disulfide bonds. As to expression, expressed by the venom gland.

It is found in the secreted. This is U-scoloptoxin(11)-Sm3a from Scolopendra morsitans (Tanzanian blue ringleg centipede).